Reading from the N-terminus, the 50-residue chain is Large ribosomal subunit protein bL33A (50 aa).

Belongs to the bacterial ribosomal protein bL33 family.

This chain is Large ribosomal subunit protein bL33A, found in Streptococcus thermophilus (strain CNRZ 1066).